The primary structure comprises 295 residues: MYPAYNPYSYRYLNPRNKGMSWRQKNYLASYGDTGDYCDNYQRAQLKAILSQVNPNLTPRLCRANTRDVGVQVNPRQDASVQCSLGPRTLLRRRPGALRKPPPEQGSPASPTKTVRFPRTIAVYSPVAAGRLAPFQDEGVNLEEKGEAVRSEGSEGGRQEGKQGDGEIKEQMKMDKTDEEEAAPAQTRPKFQFLEQKYGYYHCKDCNIRWESAYVWCVQETNKVYFKQFCRTCQKSYNPYRVEDIMCQSCKQTRCACPVKLRHVDPKRPHRQDLCGRCKGKRLSCDSTFSFKYII.

Disordered stretches follow at residues 80–115 and 144–186; these read SVQC…TKTV and EKGE…APAQ. The segment covering 144-176 has biased composition (basic and acidic residues); sequence EKGEAVRSEGSEGGRQEGKQGDGEIKEQMKMDK. The segment at 197–280 adopts a 3CxxC-type zinc-finger fold; the sequence is KYGYYHCKDC…RQDLCGRCKG (84 aa).

The protein belongs to the ZAR1 family. Ovary. Also expressed in lung and muscle.

The protein localises to the cytoplasm. The protein resides in the cytoplasmic ribonucleoprotein granule. Functionally, mRNA-binding protein required for maternal mRNA storage, translation and degradation during oocyte maturation. Probably promotes formation of some phase-separated membraneless compartment that stores maternal mRNAs in oocytes: acts by undergoing liquid-liquid phase separation upon binding to maternal mRNAs. Binds to the 3'-UTR of maternal mRNAs in immature oocytes, inhibiting their translation. The polypeptide is Zygote arrest protein 1.S (zar1.S) (Xenopus laevis (African clawed frog)).